The following is a 238-amino-acid chain: Large ribosomal subunit protein uL2 (238 aa).

Positions 198–238 (NHPHGGGSHQSPSFPTTVSRNAPPGRKVGHIAARSTGRRKR) are disordered. Over residues 206 to 217 (HQSPSFPTTVSR) the composition is skewed to polar residues.

The protein belongs to the universal ribosomal protein uL2 family. In terms of assembly, part of the 50S ribosomal subunit. Forms a bridge to the 30S subunit in the 70S ribosome.

In terms of biological role, one of the primary rRNA binding proteins. Required for association of the 30S and 50S subunits to form the 70S ribosome, for tRNA binding and peptide bond formation. It has been suggested to have peptidyltransferase activity; this is somewhat controversial. Makes several contacts with the 16S rRNA in the 70S ribosome. The chain is Large ribosomal subunit protein uL2 from Hyperthermus butylicus (strain DSM 5456 / JCM 9403 / PLM1-5).